Here is a 60-residue protein sequence, read N- to C-terminus: Large ribosomal subunit protein bL33 (60 aa).

It belongs to the bacterial ribosomal protein bL33 family.

The chain is Large ribosomal subunit protein bL33 from Chlorobium limicola (strain DSM 245 / NBRC 103803 / 6330).